We begin with the raw amino-acid sequence, 440 residues long: Light-independent protochlorophyllide reductase subunit N (440 aa).

Residues 1 to 24 (MTCRPALSDSHPPEPGTPSSPSFG) are disordered. The [4Fe-4S] cluster site is built by Cys-42, Cys-67, and Cys-128.

The protein belongs to the BchN/ChlN family. In terms of assembly, protochlorophyllide reductase is composed of three subunits; BchL, BchN and BchB. Forms a heterotetramer of two BchB and two BchN subunits. The cofactor is [4Fe-4S] cluster.

The enzyme catalyses chlorophyllide a + oxidized 2[4Fe-4S]-[ferredoxin] + 2 ADP + 2 phosphate = protochlorophyllide a + reduced 2[4Fe-4S]-[ferredoxin] + 2 ATP + 2 H2O. It participates in porphyrin-containing compound metabolism; bacteriochlorophyll biosynthesis (light-independent). In terms of biological role, component of the dark-operative protochlorophyllide reductase (DPOR) that uses Mg-ATP and reduced ferredoxin to reduce ring D of protochlorophyllide (Pchlide) to form chlorophyllide a (Chlide). This reaction is light-independent. The NB-protein (BchN-BchB) is the catalytic component of the complex. The polypeptide is Light-independent protochlorophyllide reductase subunit N (Rhodospirillum rubrum (strain ATCC 11170 / ATH 1.1.1 / DSM 467 / LMG 4362 / NCIMB 8255 / S1)).